Here is a 139-residue protein sequence, read N- to C-terminus: ATP synthase epsilon chain (139 aa).

The protein belongs to the ATPase epsilon chain family. As to quaternary structure, F-type ATPases have 2 components, CF(1) - the catalytic core - and CF(0) - the membrane proton channel. CF(1) has five subunits: alpha(3), beta(3), gamma(1), delta(1), epsilon(1). CF(0) has three main subunits: a, b and c.

It is found in the cell membrane. In terms of biological role, produces ATP from ADP in the presence of a proton gradient across the membrane. The polypeptide is ATP synthase epsilon chain (Enterococcus faecalis (strain ATCC 700802 / V583)).